The sequence spans 264 residues: Thymidylate synthase (264 aa).

Position 21 (R21) interacts with dUMP. Position 51 (H51) interacts with (6R)-5,10-methylene-5,6,7,8-tetrahydrofolate. A dUMP-binding site is contributed by 126-127 (RR). The active-site Nucleophile is C146. Residues 166-169 (RSAD), N177, and 207-209 (HIY) contribute to the dUMP site. D169 provides a ligand contact to (6R)-5,10-methylene-5,6,7,8-tetrahydrofolate. Residue A263 participates in (6R)-5,10-methylene-5,6,7,8-tetrahydrofolate binding.

Belongs to the thymidylate synthase family. Bacterial-type ThyA subfamily. Homodimer.

The protein resides in the cytoplasm. It carries out the reaction dUMP + (6R)-5,10-methylene-5,6,7,8-tetrahydrofolate = 7,8-dihydrofolate + dTMP. It participates in pyrimidine metabolism; dTTP biosynthesis. In terms of biological role, catalyzes the reductive methylation of 2'-deoxyuridine-5'-monophosphate (dUMP) to 2'-deoxythymidine-5'-monophosphate (dTMP) while utilizing 5,10-methylenetetrahydrofolate (mTHF) as the methyl donor and reductant in the reaction, yielding dihydrofolate (DHF) as a by-product. This enzymatic reaction provides an intracellular de novo source of dTMP, an essential precursor for DNA biosynthesis. This chain is Thymidylate synthase, found in Rhizobium meliloti (strain 1021) (Ensifer meliloti).